The chain runs to 425 residues: MSPAFRTMDVEPRTKGILLEPFVHQVGGHSCVLRFNETTLCKPLVPREHQFYETLPAEMRRFTPQYKGVVSVRFEEDEDRNLCLIAYPLKGDHGPVDIVDNSDCEPKSKLLRWTNKKHHVLETEKSPKDWVRQHRKEEKMKSHKLEEEFEWLKKSEVLYYSVEKKGTVSSQLKHYNPWSMKCHQQQLQRMKENAKHRNQYKFILLENLTCRYEVPCVLDLKMGTRQHGDDASEEKAANQIRKCQQSTSAVIGVRVCGMQVYQAGTGQLMFMNKYHGRKLSVQGFKEALFQFFHNGRYLRRELLGPVLKKLTELKAVLERQESYRFYSSSLLVIYDGKEWPEVTLDSDAEDLEDLSEESADESAGAYAYKPLGASSVDVRMIDFAHTTCRLYGEDSVVHEGQDAGYIFGLQSLIDIVTEISEESGE.

ATP-binding positions include glutamate 206–leucine 208 and aspartate 219. Substrate contacts are provided by residues proline 215–glycine 223, lysine 221, and lysine 235–lysine 242. Aspartate 382 contributes to the ATP binding site. Histidine 385 serves as a coordination point for substrate.

Belongs to the inositol phosphokinase (IPK) family. As to expression, highly expressed in small intestine.

Its subcellular location is the nucleus. The enzyme catalyses 1D-myo-inositol hexakisphosphate + ATP = 5-diphospho-1D-myo-inositol 1,2,3,4,6-pentakisphosphate + ADP. It functions in the pathway phospholipid metabolism; phosphatidylinositol metabolism. Converts inositol hexakisphosphate (InsP6) to diphosphoinositol pentakisphosphate (InsP7/PP-InsP5). The polypeptide is Inositol hexakisphosphate kinase 2 (Ip6k2) (Rattus norvegicus (Rat)).